An 86-amino-acid polypeptide reads, in one-letter code: Small ribosomal subunit protein bS20 (86 aa).

A compositionally biased stretch (basic residues) spans 1–27; it reads MANSKSAKKRAIQAEKRRQHNASRRSM. The interval 1-28 is disordered; it reads MANSKSAKKRAIQAEKRRQHNASRRSMM.

The protein belongs to the bacterial ribosomal protein bS20 family.

In terms of biological role, binds directly to 16S ribosomal RNA. The polypeptide is Small ribosomal subunit protein bS20 (Vibrio parahaemolyticus serotype O3:K6 (strain RIMD 2210633)).